The primary structure comprises 580 residues: Serine/threonine-protein kinase srk1 (580 aa).

A compositionally biased stretch (polar residues) spans 51 to 61 (VADSTQNPTSK). Residues 51-91 (VADSTQNPTSKPKSRHAHFHETVHENPSEYSRSKCKQPTNE) are disordered. A Protein kinase domain is found at 124 to 421 (YTLLQKMGDG…IHQFLAHPWI (298 aa)). Residues 130–138 (MGDGAFSNV) and K153 each bind ATP. The active-site Proton acceptor is D257. Positions 530 to 580 (NLSGENDPSLASRQPAQSQQQSSQRSRNKFKGFQLNLSKATLYNRRHRQKV) are disordered. Residues 537–554 (PSLASRQPAQSQQQSSQR) show a composition bias toward low complexity.

The protein belongs to the protein kinase superfamily. CAMK Ser/Thr protein kinase family. CaMK subfamily. It depends on Mg(2+) as a cofactor. Post-translationally, phosphorylated by sty1.

It is found in the cytoplasm. The protein localises to the nucleus. The protein resides in the nucleolus. It localises to the spore core. The catalysed reaction is L-seryl-[protein] + ATP = O-phospho-L-seryl-[protein] + ADP + H(+). It catalyses the reaction L-threonyl-[protein] + ATP = O-phospho-L-threonyl-[protein] + ADP + H(+). Functionally, delays the mitotic G2/M transition by promoting nuclear exclusion of cdc25. During osmotic stress, inhibits the G2/M transition in a sty1 stress-activated MAPK pathway-dependent manner. This chain is Serine/threonine-protein kinase srk1, found in Schizosaccharomyces pombe (strain 972 / ATCC 24843) (Fission yeast).